Consider the following 107-residue polypeptide: uncharacterized protein (107 aa).

3 consecutive transmembrane segments (helical) span residues 20 to 40 (FISL…EVGI), 49 to 69 (PAIL…ISTV), and 86 to 106 (VVML…KLFL).

It localises to the membrane. This is an uncharacterized protein from Saccharomyces cerevisiae (strain ATCC 204508 / S288c) (Baker's yeast).